The chain runs to 185 residues: Thymidine kinase (185 aa).

8–15 (GPMYSGKT) contacts ATP. The active-site Proton acceptor is E85. F117 is a substrate binding site. Zn(2+) contacts are provided by C142 and C145. 161–165 (IIEIG) contacts substrate. Residues C174 and C177 each contribute to the Zn(2+) site.

The protein belongs to the thymidine kinase family.

The catalysed reaction is thymidine + ATP = dTMP + ADP + H(+). This Choristoneura fumiferana entomopoxvirus (CfEPV) protein is Thymidine kinase (TK).